The chain runs to 523 residues: Cytoplasmic dynein 1 light intermediate chain 1 (523 aa).

The interval 1–25 is disordered; the sequence is MAAVGRVGSFGSSPPGLASTYASGP. Residue 74–81 coordinates ATP; that stretch reads GEDGAGKT. Disordered regions lie at residues 200–219, 387–434, and 457–523; these read PGEDFPASPQRRTTGAQEDR, PPTA…DPNM, and GSPG…GEAS. A Phosphoserine modification is found at serine 207. Threonine 213 carries the post-translational modification Phosphothreonine. Residues serine 398 and serine 405 each carry the phosphoserine modification. Threonine 408 carries the post-translational modification Phosphothreonine. Phosphoserine is present on residues serine 412, serine 419, serine 421, and serine 427. Positions 412-421 are enriched in low complexity; the sequence is SVSSNVASVS. Gly residues predominate over residues 458-473; that stretch reads SPGGPGVGGSPGGGAA. Positions 474 to 485 are enriched in low complexity; the sequence is GASPSLPPSAKK. Residues serine 486 and serine 510 each carry the phosphoserine modification. A compositionally biased stretch (low complexity) spans 506–523; it reads PASVSPTTPTSPTEGEAS. Phosphothreonine is present on residues threonine 512, threonine 513, and threonine 515. The residue at position 516 (serine 516) is a Phosphoserine.

This sequence belongs to the dynein light intermediate chain family. As to quaternary structure, homodimer. The cytoplasmic dynein 1 complex consists of two catalytic heavy chains (HCs) and a number of non-catalytic subunits presented by intermediate chains (ICs), light intermediate chains (LICs) and light chains (LCs); the composition seems to vary in respect to the IC, LIC and LC composition. The heavy chain homodimer serves as a scaffold for the probable homodimeric assembly of the respective non-catalytic subunits. The ICs and LICs bind directly to the HC dimer and the LCs assemble on the IC dimer. Self-associates. Interacts with DYNC1H1; DYNC1LI1 and DYNC1LI2 bind mutually exclusive to DYNC1H1. Interacts with PCNT. Forms a complex with RAB11FIP3 and RAB11A1; the interaction between DYNC1LI1 and RAB11FIP3 is direct and induces DYNC1LI1 localization onto endosomal membrane; the complex regulates endocytic trafficking. Interacts with RUFY3. In terms of processing, phosphorylated during mitosis but not in interphase.

The protein resides in the cytoplasm. It localises to the chromosome. It is found in the centromere. Its subcellular location is the kinetochore. The protein localises to the cytoskeleton. The protein resides in the spindle pole. It localises to the recycling endosome membrane. In terms of biological role, acts as one of several non-catalytic accessory components of the cytoplasmic dynein 1 complex that are thought to be involved in linking dynein to cargos and to adapter proteins that regulate dynein function. Cytoplasmic dynein 1 acts as a motor for the intracellular retrograde motility of vesicles and organelles along microtubules. May play a role in binding dynein to membranous organelles or chromosomes. Probably involved in the microtubule-dependent transport of pericentrin. Is required for progress through the spindle assembly checkpoint. The phosphorylated form appears to be involved in the selective removal of MAD1L1 and MAD1L2 but not BUB1B from kinetochores. Forms a functional Rab11/RAB11FIP3/dynein complex onto endosomal membrane that regulates the movement of peripheral sorting endosomes (SE) along microtubule tracks toward the microtubule organizing center/centrosome, generating the endosomal recycling compartment (ERC). This is Cytoplasmic dynein 1 light intermediate chain 1 (Dync1li1) from Mus musculus (Mouse).